We begin with the raw amino-acid sequence, 99 residues long: Large ribosomal subunit protein uL23 (99 aa).

This sequence belongs to the universal ribosomal protein uL23 family. Part of the 50S ribosomal subunit. Contacts protein L29, and trigger factor when it is bound to the ribosome.

In terms of biological role, one of the early assembly proteins it binds 23S rRNA. One of the proteins that surrounds the polypeptide exit tunnel on the outside of the ribosome. Forms the main docking site for trigger factor binding to the ribosome. In Rhodopseudomonas palustris (strain BisB5), this protein is Large ribosomal subunit protein uL23.